We begin with the raw amino-acid sequence, 476 residues long: Aspartyl/glutamyl-tRNA(Asn/Gln) amidotransferase subunit B (476 aa).

It belongs to the GatB/GatE family. GatB subfamily. As to quaternary structure, heterotrimer of A, B and C subunits.

The catalysed reaction is L-glutamyl-tRNA(Gln) + L-glutamine + ATP + H2O = L-glutaminyl-tRNA(Gln) + L-glutamate + ADP + phosphate + H(+). It catalyses the reaction L-aspartyl-tRNA(Asn) + L-glutamine + ATP + H2O = L-asparaginyl-tRNA(Asn) + L-glutamate + ADP + phosphate + 2 H(+). Functionally, allows the formation of correctly charged Asn-tRNA(Asn) or Gln-tRNA(Gln) through the transamidation of misacylated Asp-tRNA(Asn) or Glu-tRNA(Gln) in organisms which lack either or both of asparaginyl-tRNA or glutaminyl-tRNA synthetases. The reaction takes place in the presence of glutamine and ATP through an activated phospho-Asp-tRNA(Asn) or phospho-Glu-tRNA(Gln). The chain is Aspartyl/glutamyl-tRNA(Asn/Gln) amidotransferase subunit B from Solidesulfovibrio magneticus (strain ATCC 700980 / DSM 13731 / RS-1) (Desulfovibrio magneticus).